The chain runs to 340 residues: ATP-dependent 6-phosphofructokinase (340 aa).

Position 11 (Gly11) interacts with ATP. 21–25 (RAVVR) is an ADP binding site. Residues 72-73 (RY) and 102-105 (GDGS) each bind ATP. Asp103 is a Mg(2+) binding site. 125–127 (TID) lines the substrate pocket. Asp127 serves as the catalytic Proton acceptor. Residue Arg154 coordinates ADP. Residues Arg162 and 169-171 (MGR) each bind substrate. ADP is bound by residues 185–187 (GAD), Lys211, and 213–215 (KNH). Residues Glu222, Arg244, and 250 to 253 (HIQR) contribute to the substrate site.

The protein belongs to the phosphofructokinase type A (PFKA) family. ATP-dependent PFK group I subfamily. Prokaryotic clade 'B1' sub-subfamily. In terms of assembly, homotetramer. The cofactor is Mg(2+).

It is found in the cytoplasm. It catalyses the reaction beta-D-fructose 6-phosphate + ATP = beta-D-fructose 1,6-bisphosphate + ADP + H(+). It participates in carbohydrate degradation; glycolysis; D-glyceraldehyde 3-phosphate and glycerone phosphate from D-glucose: step 3/4. Allosterically activated by ADP and other diphosphonucleosides, and allosterically inhibited by phosphoenolpyruvate. Functionally, catalyzes the phosphorylation of D-fructose 6-phosphate to fructose 1,6-bisphosphate by ATP, the first committing step of glycolysis. This is ATP-dependent 6-phosphofructokinase from Lactococcus lactis subsp. lactis (Streptococcus lactis).